The primary structure comprises 241 residues: Fatty acid metabolism regulator protein (241 aa).

The region spanning 11 to 79 (QSPAALAEEY…HGKPTKVNNI (69 aa)) is the HTH gntR-type domain. A DNA-binding region (H-T-H motif) is located at residues 39–58 (ERDLADKIGVTRTTLREVLQ).

In terms of assembly, homodimer.

The protein resides in the cytoplasm. In terms of biological role, multifunctional regulator of fatty acid metabolism. The protein is Fatty acid metabolism regulator protein of Haemophilus influenzae (strain 86-028NP).